Reading from the N-terminus, the 967-residue chain is Phosphoenolpyruvate carboxylase 1 (967 aa).

Serine 11 carries the phosphoserine modification. Catalysis depends on residues histidine 173 and lysine 602. Phosphoserine is present on serine 704.

The protein belongs to the PEPCase type 1 family. In terms of assembly, homotetramer. The cofactor is Mg(2+). It depends on Mn(2+) as a cofactor. The phosphorylation of Ser-11 is reversibly promoted by inorganic phosphate (Pi) deprivation. Enhanced activity by phosphorylation at pH 7.3 by lowering Km and sensitivity to inhibition by L-malate and L-aspartate, while enhancing activation by glucose 6-phosphate. In terms of tissue distribution, expressed in all plant organs, with higher levels in roots.

The protein resides in the cytoplasm. The catalysed reaction is oxaloacetate + phosphate = phosphoenolpyruvate + hydrogencarbonate. Its activity is regulated as follows. By light-reversible phosphorylation. Activated by inorganic phosphate (Pi) deprivation and glucose 6-phosphate. Inhibited by L-malate and L-aspartate. In terms of biological role, through the carboxylation of phosphoenolpyruvate (PEP) it forms oxaloacetate, a four-carbon dicarboxylic acid source for the tricarboxylic acid cycle. Contributes probably to the adaptation to inorganic phosphate (Pi) deprivation. The polypeptide is Phosphoenolpyruvate carboxylase 1 (PPC1) (Arabidopsis thaliana (Mouse-ear cress)).